The sequence spans 200 residues: Glycerol-3-phosphate acyltransferase (200 aa).

Transmembrane regions (helical) follow at residues 2–22, 51–71, 84–104, 114–134, and 159–179; these read FNIP…AVIV, KAAA…VLLA, AIAA…FFGF, LGVL…IWLV, and FFMP…LVLF.

It belongs to the PlsY family. Probably interacts with PlsX.

The protein resides in the cell inner membrane. The enzyme catalyses an acyl phosphate + sn-glycerol 3-phosphate = a 1-acyl-sn-glycero-3-phosphate + phosphate. The protein operates within lipid metabolism; phospholipid metabolism. Functionally, catalyzes the transfer of an acyl group from acyl-phosphate (acyl-PO(4)) to glycerol-3-phosphate (G3P) to form lysophosphatidic acid (LPA). This enzyme utilizes acyl-phosphate as fatty acyl donor, but not acyl-CoA or acyl-ACP. This Neisseria meningitidis serogroup B (strain ATCC BAA-335 / MC58) protein is Glycerol-3-phosphate acyltransferase.